We begin with the raw amino-acid sequence, 1224 residues long: Dynactin subunit 1 (1224 aa).

The span at 1 to 10 (MAQSRRHPHG) shows a compositional bias: basic residues. The disordered stretch occupies residues 1–30 (MAQSRRHPHGRASSAGPRMSTEASSKPLKV). Residues 49 to 91 (GATLXATGKWVGVILDEAKGKNDGTVQGRKYFTCEENHGIFVR) enclose the CAP-Gly domain. 3 disordered regions span residues 100–217 (DGAD…RSQV), 374–402 (SASEKQEHVKLQKQMEKKNTELESLRQQR), and 888–918 (PHCHHEQDATAMQEGEYDADRPQSKPTPPAE). A compositionally biased stretch (basic residues) spans 117–146 (VPKRHSRXAAKGSKLRGAKPKKTTARRPKP). The segment covering 148–180 (RTPTSAPSSGTAGPSGSASASGGEMSSSEPSTP) has biased composition (low complexity). Residues 205-540 (SPTKEEENLR…QEASAEKQQQ (336 aa)) adopt a coiled-coil conformation. The segment covering 207–217 (TKEEENLRSQV) has biased composition (basic and acidic residues). Coiled coils occupy residues 936–1042 (LKLE…EGLR) and 1081–1117 (KDSPLLLQQIEALQLSIRHLKNENNRLKGAQMKLELA). The interval 1203 to 1224 (WCSSSRARASPPASACSPPRPS) is disordered. Low complexity predominate over residues 1204-1224 (CSSSRARASPPASACSPPRPS).

This sequence belongs to the dynactin 150 kDa subunit family. As to quaternary structure, monomer and homodimer. Subunit of dynactin, a multiprotein complex part of a tripartite complex with dynein and a adapter, such as BICDL1, BICD2 or HOOK3. The dynactin complex is built around ACTR1A/ACTB filament and consists of an actin-related filament composed of a shoulder domain, a pointed end and a barbed end. Its length is defined by its flexible shoulder domain. The soulder is composed of 2 DCTN1 subunits, 4 DCTN2 and 2 DCTN3. DCTN1/p150(glued) binds directly to microtubules and to cytoplasmic dynein. Ubiquitously expressed.

It is found in the cytoplasm. The protein localises to the cytoskeleton. Its subcellular location is the microtubule organizing center. It localises to the centrosome. The protein resides in the centriole. It is found in the spindle. The protein localises to the cell cortex. Part of the dynactin complex that activates the molecular motor dynein for ultra-processive transport along microtubules. Plays a key role in dynein-mediated retrograde transport of vesicles and organelles along microtubules by recruiting and tethering dynein to microtubules. Binds to both dynein and microtubules providing a link between specific cargos, microtubules and dynein. Essential for targeting dynein to microtubule plus ends, recruiting dynein to membranous cargos and enhancing dynein processivity (the ability to move along a microtubule for a long distance without falling off the track). Can also act as a brake to slow the dynein motor during motility along the microtubule. Can regulate microtubule stability by promoting microtubule formation, nucleation and polymerization and by inhibiting microtubule catastrophe in neurons. Inhibits microtubule catastrophe by binding both to microtubules and to tubulin, leading to enhanced microtubule stability along the axon. Plays a role in metaphase spindle orientation. Plays a role in centriole cohesion and subdistal appendage organization and function. Its recruitment to the centriole in a KIF3A-dependent manner is essential for the maintenance of centriole cohesion and the formation of subdistal appendage. Also required for microtubule anchoring at the mother centriole. Plays a role in primary cilia formation. The polypeptide is Dynactin subunit 1 (DCTN1) (Gallus gallus (Chicken)).